The following is a 283-amino-acid chain: Acetyl-coenzyme A carboxylase carboxyl transferase subunit beta (283 aa).

Residues 29–283 (LWVACPKCQQ…LKLHERGAHY (255 aa)) form the CoA carboxyltransferase N-terminal domain. Zn(2+) is bound by residues C33, C36, C51, and C54. The segment at 33 to 54 (CPKCQQSIYHKDLGYYRTCPVC) adopts a C4-type zinc-finger fold.

It belongs to the AccD/PCCB family. As to quaternary structure, acetyl-CoA carboxylase is a heterohexamer composed of biotin carboxyl carrier protein (AccB), biotin carboxylase (AccC) and two subunits each of ACCase subunit alpha (AccA) and ACCase subunit beta (AccD). It depends on Zn(2+) as a cofactor.

The protein resides in the cytoplasm. It catalyses the reaction N(6)-carboxybiotinyl-L-lysyl-[protein] + acetyl-CoA = N(6)-biotinyl-L-lysyl-[protein] + malonyl-CoA. The protein operates within lipid metabolism; malonyl-CoA biosynthesis; malonyl-CoA from acetyl-CoA: step 1/1. Functionally, component of the acetyl coenzyme A carboxylase (ACC) complex. Biotin carboxylase (BC) catalyzes the carboxylation of biotin on its carrier protein (BCCP) and then the CO(2) group is transferred by the transcarboxylase to acetyl-CoA to form malonyl-CoA. In Latilactobacillus sakei subsp. sakei (strain 23K) (Lactobacillus sakei subsp. sakei), this protein is Acetyl-coenzyme A carboxylase carboxyl transferase subunit beta.